We begin with the raw amino-acid sequence, 146 residues long: Hemoglobin subunit beta-1 (146 aa).

One can recognise a Globin domain in the interval 2–146 (EWTDKERAII…VVSALGKQYH (145 aa)). The heme b site is built by His63 and His92.

It belongs to the globin family. Hb 1 is a heterotetramer of two alpha-1 and two beta-1 chains. In terms of tissue distribution, red blood cells.

Functionally, involved in oxygen transport from gills to the various peripheral tissues. In Gobionotothen gibberifrons (Humped rockcod), this protein is Hemoglobin subunit beta-1 (hbb1).